A 257-amino-acid polypeptide reads, in one-letter code: Thioredoxin-dependent peroxide reductase, mitochondrial (257 aa).

A mitochondrion-targeting transit peptide spans 1 to 62 (MAAAAGRLLW…SAFSTSSSFH (62 aa)). The region spanning 64 to 222 (PAVTQHAPYF…TLRLVKAFQF (159 aa)) is the Thioredoxin domain. Lys84 bears the N6-succinyllysine mark. Lys92 is modified (N6-acetyllysine; alternate). The residue at position 92 (Lys92) is an N6-succinyllysine; alternate. The active-site Cysteine sulfenic acid (-SOH) intermediate is Cys109. Thr147 bears the Phosphothreonine mark.

It belongs to the peroxiredoxin family. AhpC/Prx1 subfamily. In terms of assembly, homodimer; disulfide-linked, upon oxidation. 6 homodimers assemble to form a ring-like dodecamer. Interacts with NEK6. Interacts with LRRK2. Interacts with MAP3K13. Interacts with RPS6KC1 (via PX domain). Post-translationally, phosphorylated by LRRK2; phosphorylation reduces perodixase activity. The enzyme can be inactivated by further oxidation of the cysteine sulfenic acid (C(P)-SOH) to sulphinic acid (C(P)-SO2H) and sulphonic acid (C(P)-SO3H) instead of its condensation to a disulfide bond. In terms of processing, S-palmitoylated. As to expression, housekeeping-type gene preferentially expressed in murine erythroleukemia (MEL) cells.

The protein resides in the mitochondrion. It is found in the cytoplasm. Its subcellular location is the early endosome. The enzyme catalyses a hydroperoxide + [thioredoxin]-dithiol = an alcohol + [thioredoxin]-disulfide + H2O. Its function is as follows. Thiol-specific peroxidase that catalyzes the reduction of hydrogen peroxide and organic hydroperoxides to water and alcohols, respectively. Plays a role in cell protection against oxidative stress by detoxifying peroxides. Acts synergistically with MAP3K13 to regulate the activation of NF-kappa-B in the cytosol. Required for the maintenance of physical strength. The protein is Thioredoxin-dependent peroxide reductase, mitochondrial (Prdx3) of Mus musculus (Mouse).